Here is a 178-residue protein sequence, read N- to C-terminus: uncharacterized protein (178 aa).

This is an uncharacterized protein from Acanthamoeba polyphaga mimivirus (APMV).